Here is a 239-residue protein sequence, read N- to C-terminus: Short palate, lung and nasal epithelium carcinoma-associated protein 2A (239 aa).

The signal sequence occupies residues 1 to 20 (MVQLWKLVLLCGLLAGTSES). A disulfide bond links C166 and C209.

It belongs to the BPI/LBP/Plunc superfamily. Plunc family. As to expression, detected in salivary tissues: parotid, submandibular and sublingual glands.

It is found in the secreted. This is Short palate, lung and nasal epithelium carcinoma-associated protein 2A (SPLUNC2A) from Bos taurus (Bovine).